The sequence spans 377 residues: ATP-dependent (S)-NAD(P)H-hydrate dehydratase (377 aa).

Positions 10–366 (LLHLSRQLIQ…EYLHESFTEL (357 aa)) constitute a YjeF C-terminal domain. Residues Gly148 and 201–207 (NVVEFQR) contribute to the (6S)-NADPHX site. ATP contacts are provided by residues 245–249 (KGEHD) and 264–273 (GSNKRVGGQG). Asp274 is a (6S)-NADPHX binding site.

This sequence belongs to the NnrD/CARKD family. Requires Mg(2+) as cofactor.

The protein localises to the cytoplasm. The enzyme catalyses (6S)-NADHX + ATP = ADP + phosphate + NADH + H(+). The catalysed reaction is (6S)-NADPHX + ATP = ADP + phosphate + NADPH + H(+). Its function is as follows. Catalyzes the dehydration of the S-form of NAD(P)HX at the expense of ATP, which is converted to ADP. Together with NAD(P)HX epimerase, which catalyzes the epimerization of the S- and R-forms, the enzyme allows the repair of both epimers of NAD(P)HX, a damaged form of NAD(P)H that is a result of enzymatic or heat-dependent hydration. This is ATP-dependent (S)-NAD(P)H-hydrate dehydratase from Candida albicans (strain SC5314 / ATCC MYA-2876) (Yeast).